The chain runs to 120 residues: Peptidyl-tRNA hydrolase (120 aa).

This sequence belongs to the PTH2 family.

The protein resides in the cytoplasm. The enzyme catalyses an N-acyl-L-alpha-aminoacyl-tRNA + H2O = an N-acyl-L-amino acid + a tRNA + H(+). Functionally, the natural substrate for this enzyme may be peptidyl-tRNAs which drop off the ribosome during protein synthesis. The polypeptide is Peptidyl-tRNA hydrolase (Saccharolobus islandicus (strain Y.N.15.51 / Yellowstone #2) (Sulfolobus islandicus)).